Here is a 156-residue protein sequence, read N- to C-terminus: FAD synthase (156 aa).

ATP contacts are provided by residues 9–10 (TF), 14–17 (HPGH), Asn92, and His119.

Belongs to the archaeal FAD synthase family. As to quaternary structure, homodimer. A divalent metal cation is required as a cofactor.

It catalyses the reaction FMN + ATP + H(+) = FAD + diphosphate. It participates in cofactor biosynthesis; FAD biosynthesis; FAD from FMN: step 1/1. Functionally, catalyzes the transfer of the AMP portion of ATP to flavin mononucleotide (FMN) to produce flavin adenine dinucleotide (FAD) coenzyme. The chain is FAD synthase from Methanospirillum hungatei JF-1 (strain ATCC 27890 / DSM 864 / NBRC 100397 / JF-1).